The chain runs to 218 residues: Imidazole glycerol phosphate synthase subunit HisH (218 aa).

The 207-residue stretch at 12 to 218 folds into the Glutamine amidotransferase type-1 domain; sequence SIVVVDYGLG…RNFVDYCADQ (207 aa). Cys88 functions as the Nucleophile in the catalytic mechanism. Residues His196 and Glu198 contribute to the active site.

As to quaternary structure, heterodimer of HisH and HisF.

It is found in the cytoplasm. The enzyme catalyses 5-[(5-phospho-1-deoxy-D-ribulos-1-ylimino)methylamino]-1-(5-phospho-beta-D-ribosyl)imidazole-4-carboxamide + L-glutamine = D-erythro-1-(imidazol-4-yl)glycerol 3-phosphate + 5-amino-1-(5-phospho-beta-D-ribosyl)imidazole-4-carboxamide + L-glutamate + H(+). It catalyses the reaction L-glutamine + H2O = L-glutamate + NH4(+). It functions in the pathway amino-acid biosynthesis; L-histidine biosynthesis; L-histidine from 5-phospho-alpha-D-ribose 1-diphosphate: step 5/9. Its function is as follows. IGPS catalyzes the conversion of PRFAR and glutamine to IGP, AICAR and glutamate. The HisH subunit catalyzes the hydrolysis of glutamine to glutamate and ammonia as part of the synthesis of IGP and AICAR. The resulting ammonia molecule is channeled to the active site of HisF. In Halobacterium salinarum (strain ATCC 700922 / JCM 11081 / NRC-1) (Halobacterium halobium), this protein is Imidazole glycerol phosphate synthase subunit HisH.